The chain runs to 702 residues: DNA ligase (702 aa).

NAD(+) is bound by residues 32 to 36 (DAEYD) and 81 to 82 (SL). The tract at residues 104 to 125 (AESSAQKASLNPLVRDSDQKNR) is disordered. Glu-139 provides a ligand contact to NAD(+). The N6-AMP-lysine intermediate role is filled by Lys-141. Residues Arg-162, Glu-199, Lys-316, and Lys-340 each contribute to the NAD(+) site. Cys-434, Cys-437, Cys-452, and Cys-458 together coordinate Zn(2+). The BRCT domain maps to 616-702 (KPNHPFRDKT…KALKPEGTKV (87 aa)).

The protein belongs to the NAD-dependent DNA ligase family. LigA subfamily. The cofactor is Mg(2+). Mn(2+) serves as cofactor.

It carries out the reaction NAD(+) + (deoxyribonucleotide)n-3'-hydroxyl + 5'-phospho-(deoxyribonucleotide)m = (deoxyribonucleotide)n+m + AMP + beta-nicotinamide D-nucleotide.. DNA ligase that catalyzes the formation of phosphodiester linkages between 5'-phosphoryl and 3'-hydroxyl groups in double-stranded DNA using NAD as a coenzyme and as the energy source for the reaction. It is essential for DNA replication and repair of damaged DNA. This Hamiltonella defensa subsp. Acyrthosiphon pisum (strain 5AT) protein is DNA ligase.